We begin with the raw amino-acid sequence, 459 residues long: DNA damage-inducible protein F (459 aa).

12 helical membrane-spanning segments follow: residues 2–22 (PPGV…MAFL), 29–49 (LWHL…LGLV), 63–83 (LGGV…LLFL), 111–131 (LLLA…IIDL), 154–174 (WLSA…LGVQ), 180–200 (VILL…LVMG), 207–227 (GAAL…LLMV), 265–285 (LLQL…SDII), 289–309 (AVLM…AYAV), 338–358 (IVAL…IALL), 373–393 (IWQV…GMFI), and 416–436 (LLTL…VFLA).

This sequence belongs to the multi antimicrobial extrusion (MATE) (TC 2.A.66.1) family.

It is found in the cell inner membrane. In Escherichia coli (strain K12), this protein is DNA damage-inducible protein F (dinF).